A 339-amino-acid polypeptide reads, in one-letter code: Anthranilate phosphoribosyltransferase (339 aa).

5-phospho-alpha-D-ribose 1-diphosphate contacts are provided by residues G80, 83–84 (GD), T88, 90–93 (NIST), 108–116 (KHGNRAVSS), and S120. G80 provides a ligand contact to anthranilate. S92 serves as a coordination point for Mg(2+). Position 111 (N111) interacts with anthranilate. R166 is a binding site for anthranilate. Mg(2+) is bound by residues D225 and E226.

The protein belongs to the anthranilate phosphoribosyltransferase family. As to quaternary structure, homodimer. Mg(2+) serves as cofactor.

The catalysed reaction is N-(5-phospho-beta-D-ribosyl)anthranilate + diphosphate = 5-phospho-alpha-D-ribose 1-diphosphate + anthranilate. The protein operates within amino-acid biosynthesis; L-tryptophan biosynthesis; L-tryptophan from chorismate: step 2/5. Catalyzes the transfer of the phosphoribosyl group of 5-phosphorylribose-1-pyrophosphate (PRPP) to anthranilate to yield N-(5'-phosphoribosyl)-anthranilate (PRA). The sequence is that of Anthranilate phosphoribosyltransferase from Caldanaerobacter subterraneus subsp. tengcongensis (strain DSM 15242 / JCM 11007 / NBRC 100824 / MB4) (Thermoanaerobacter tengcongensis).